The sequence spans 194 residues: Leucyl/phenylalanyl-tRNA--protein transferase (194 aa).

This sequence belongs to the L/F-transferase family.

The protein resides in the cytoplasm. It catalyses the reaction N-terminal L-lysyl-[protein] + L-leucyl-tRNA(Leu) = N-terminal L-leucyl-L-lysyl-[protein] + tRNA(Leu) + H(+). It carries out the reaction N-terminal L-arginyl-[protein] + L-leucyl-tRNA(Leu) = N-terminal L-leucyl-L-arginyl-[protein] + tRNA(Leu) + H(+). The catalysed reaction is L-phenylalanyl-tRNA(Phe) + an N-terminal L-alpha-aminoacyl-[protein] = an N-terminal L-phenylalanyl-L-alpha-aminoacyl-[protein] + tRNA(Phe). Functionally, functions in the N-end rule pathway of protein degradation where it conjugates Leu, Phe and, less efficiently, Met from aminoacyl-tRNAs to the N-termini of proteins containing an N-terminal arginine or lysine. The sequence is that of Leucyl/phenylalanyl-tRNA--protein transferase from Chlorobaculum tepidum (strain ATCC 49652 / DSM 12025 / NBRC 103806 / TLS) (Chlorobium tepidum).